A 213-amino-acid chain; its full sequence is Protein PAE0745 (213 aa).

One can recognise an AMMECR1 domain in the interval 8 to 201 (EEGTFLVRLA…EKSPGGEVYE (194 aa)).

The sequence is that of Protein PAE0745 from Pyrobaculum aerophilum (strain ATCC 51768 / DSM 7523 / JCM 9630 / CIP 104966 / NBRC 100827 / IM2).